Reading from the N-terminus, the 314-residue chain is MLDFEKPLFEIRNKIESLKESQDKNDVDLQEEIDMLEASLERETKKIYTNLKPWDRVQIARLQERPTTLDYIPYIFDSFMELHGDRNFRDDPAMIGGIGFLNGRAVTVIGQQRGKDTKDNIYRNFGMAHPEGYRKALRLMKQAEKFNRPIFTFIDTKGAYPGKAAEERGQSESIATNLIEMASLKVPVIAIVIGEGGSGGALGIGIANKVLMLENSTYSVISPEGAAALLWKDSNLAKIAAETMKITAHDIKQLGIIDDVISEPLGGAHKDIEQQALAIKSAFVEQLDSLESLSRDEIANDRFEKFRNIGSYIE.

A CoA carboxyltransferase C-terminal domain is found at 32-289 (EIDMLEASLE…KSAFVEQLDS (258 aa)).

This sequence belongs to the AccA family. In terms of assembly, acetyl-CoA carboxylase is a heterohexamer composed of biotin carboxyl carrier protein (AccB), biotin carboxylase (AccC) and two subunits each of ACCase subunit alpha (AccA) and ACCase subunit beta (AccD).

Its subcellular location is the cytoplasm. It catalyses the reaction N(6)-carboxybiotinyl-L-lysyl-[protein] + acetyl-CoA = N(6)-biotinyl-L-lysyl-[protein] + malonyl-CoA. The protein operates within lipid metabolism; malonyl-CoA biosynthesis; malonyl-CoA from acetyl-CoA: step 1/1. In terms of biological role, component of the acetyl coenzyme A carboxylase (ACC) complex. First, biotin carboxylase catalyzes the carboxylation of biotin on its carrier protein (BCCP) and then the CO(2) group is transferred by the carboxyltransferase to acetyl-CoA to form malonyl-CoA. This is Acetyl-coenzyme A carboxylase carboxyl transferase subunit alpha from Staphylococcus aureus (strain bovine RF122 / ET3-1).